The chain runs to 647 residues: Calmodulin-binding protein 60 B (647 aa).

The segment covering 1-10 (MMDSGNNNMN) has biased composition (polar residues). Positions 1–26 (MMDSGNNNMNRAKRNLDGNDDDQPER) are disordered. Residues 8–85 (NMNRAKRNLD…TGSSGSSPKR (78 aa)) are calmodulin-binding. The short motif at 12–19 (AKRNLDGN) is the Nuclear localization signal element. Positions 155–278 (EDDEDWTQEE…AFHKKLTAEG (124 aa)) are DNA-binding.

Belongs to the plant ACBP60 protein family. Interacts with calmodulin (CaM). As to expression, expressed in leaves, stems, flowers, developing seeds and root.

Its subcellular location is the nucleus. Its function is as follows. Transcription activator that binds DNA in a sequence-specific manner, likely 5'-GAAATTTTGG-3', to promote the expression of target genes. This chain is Calmodulin-binding protein 60 B, found in Arabidopsis thaliana (Mouse-ear cress).